The following is a 1042-amino-acid chain: Probable inorganic carbon transporter subunit DabA (1042 aa).

Zn(2+) contacts are provided by cysteine 462, aspartate 464, histidine 721, and cysteine 736.

Belongs to the inorganic carbon transporter (TC 9.A.2) DabA family. In terms of assembly, forms a complex with DabB. It depends on Zn(2+) as a cofactor.

It is found in the cell inner membrane. In terms of biological role, part of an energy-coupled inorganic carbon pump. The polypeptide is Probable inorganic carbon transporter subunit DabA (Nitrosomonas eutropha (strain DSM 101675 / C91 / Nm57)).